The primary structure comprises 949 residues: MKETSFWGETPSLSFADDTDKPLSDRTASPPCDPASSLQTALDTAAAQGQTTRENVLSILRRHLGSGNATVRREFEKRRMSGIDAARALARQADDMVCALAELAAQKHESPGETLCLCATGGYGAGLLAPFSDIDILFLIPGDPTPAMTARIEFILYALWDLGLRVGHATRSIAECVRDADSDLTIRTALLDLRFLHGERGLARDLRCALGADLQNDRLCEFVMGKIAEREQRHRRFGDNPYMVEPNIKEGRGGLRDLQTLNWMGRAALGCAVSTPDRSGQPAEAPQTPSFASFGLLTDRESLRARRSWDFLWTVRLHLHYITGRAEERLTFDVQPVIGGRMGYATHGRQRGVERFMRHYFLTARDVMRLTSVLQPVVLMHLQDQTTGEPPKVVPGPEEFQTIAGRICPIEPVTFAAQPREMFRLLDCGRRHDLPLHPIAMQQIIRNERHAVTLRDDPETAKIFLDLLCEPSADETKAVPFWLPILNETGLLGRLLPDWSRVVGQMQFDSYHIYTVDEHIVEAVRMMGQIEAGRMADEIPLAYTLASDLRSRRALYVAVLLHDIGKGRGGDHSEIGADLALTICPQLGLDPEETDTVSWLVLHHLLLSQTAFTRDIDDPRTILDLADTIQSPERLRLLLLLTIADMRAVSPKVWNAWKATLLRELFSRVAEVLEGGLAATERDSRVNHARELARDGLTGILPESSIDRFLDLGYPSYWLGFDTDTQMRHARMVHDSDRYRSPVTVEAYPIPERGVTELTVLCADHPGLFSQIAGALAVSGASIVDARIHTLSDGMALDTFWVQDGEGCSFEEPHQLGRLNHLVEQALSGRLDIRKGIEDASHHSTSRRMRAIHVPPRVVIDNTASDRHTVIEVNGRDRPGLLHDVTSALSSASLQISSAHITTYGMRAVDVFYVRDLLGMKITDPVRLARLRETLLASLTSAPVTTPAS.

Residues 1 to 37 (MKETSFWGETPSLSFADDTDKPLSDRTASPPCDPASS) form a disordered region. The tract at residues 1–395 (MKETSFWGET…TTGEPPKVVP (395 aa)) is uridylyltransferase. Residues 396–756 (GPEEFQTIAG…AYPIPERGVT (361 aa)) are uridylyl-removing. The HD domain occupies 516–632 (VDEHIVEAVR…LDLADTIQSP (117 aa)). ACT domains follow at residues 757-834 (ELTV…LDIR) and 870-949 (VIEV…TPAS).

The protein belongs to the GlnD family. Mg(2+) is required as a cofactor.

It carries out the reaction [protein-PII]-L-tyrosine + UTP = [protein-PII]-uridylyl-L-tyrosine + diphosphate. The catalysed reaction is [protein-PII]-uridylyl-L-tyrosine + H2O = [protein-PII]-L-tyrosine + UMP + H(+). Uridylyltransferase (UTase) activity is inhibited by glutamine, while glutamine activates uridylyl-removing (UR) activity. Its function is as follows. Modifies, by uridylylation and deuridylylation, the PII regulatory proteins (GlnB and homologs), in response to the nitrogen status of the cell that GlnD senses through the glutamine level. Under low glutamine levels, catalyzes the conversion of the PII proteins and UTP to PII-UMP and PPi, while under higher glutamine levels, GlnD hydrolyzes PII-UMP to PII and UMP (deuridylylation). Thus, controls uridylylation state and activity of the PII proteins, and plays an important role in the regulation of nitrogen assimilation and metabolism. This Gluconobacter oxydans (strain 621H) (Gluconobacter suboxydans) protein is Bifunctional uridylyltransferase/uridylyl-removing enzyme.